Reading from the N-terminus, the 59-residue chain is Large ribosomal subunit protein uL30 (59 aa).

Belongs to the universal ribosomal protein uL30 family. In terms of assembly, part of the 50S ribosomal subunit.

The polypeptide is Large ribosomal subunit protein uL30 (Geotalea daltonii (strain DSM 22248 / JCM 15807 / FRC-32) (Geobacter daltonii)).